We begin with the raw amino-acid sequence, 519 residues long: 2-isopropylmalate synthase (519 aa).

One can recognise a Pyruvate carboxyltransferase domain in the interval 5–267; that stretch reads VIIFDTTLRD…TTNVNPMEIS (263 aa). D14, H202, H204, and N238 together coordinate Mn(2+). Residues 392–519 form a regulatory domain region; sequence RLESINVQSG…KEQLIHIDQV (128 aa).

The protein belongs to the alpha-IPM synthase/homocitrate synthase family. LeuA type 1 subfamily. In terms of assembly, homodimer. It depends on Mn(2+) as a cofactor.

Its subcellular location is the cytoplasm. It carries out the reaction 3-methyl-2-oxobutanoate + acetyl-CoA + H2O = (2S)-2-isopropylmalate + CoA + H(+). It functions in the pathway amino-acid biosynthesis; L-leucine biosynthesis; L-leucine from 3-methyl-2-oxobutanoate: step 1/4. Catalyzes the condensation of the acetyl group of acetyl-CoA with 3-methyl-2-oxobutanoate (2-ketoisovalerate) to form 3-carboxy-3-hydroxy-4-methylpentanoate (2-isopropylmalate). The protein is 2-isopropylmalate synthase of Psychromonas ingrahamii (strain DSM 17664 / CCUG 51855 / 37).